An 891-amino-acid chain; its full sequence is MSSKDISSKSPSGNDALNDKKGTKTSETNDRNSTNNTKERDELEDLSEEDLQLKNDLELLVQAVQDATPELVGSSLTQLKEIIRTSTSSMTAVPKPLKFLRPHYFTLVKIYDSWPQSPQKTQLADILSVLGMSYSNTSKHESLKYRLQGVTTDPSLWGHEYVRHLASEIEEEFASRQEEEAPTDDLMELALTIVPFFLTHNAEADAIDLLQELGAIEKVVPFVELDNASRVCLYITSCVNLLPFPEDVAMLRTAHAIYRKFDQLTQALNVAIRLDDMSLIKEDCEAATDPLLKKQMSYMLARQQIPMDMGDEELNDALNNTHLSDHFHYLGKELNLMDPKVPEDIFKTHLEVARTGLGASGVYSAKQNLANTFVNALVNAGYSNDRLILVDDEKTSWIYKNKESGLISATASIGLLQLWNVDMGLSLLDKYLYSSEENTKAGALLGIGVTNVAVRNEADPAMAILSEYLETGSVKLRASAILGLGLAYSGANREDLLDMLSPIVTDTDCPMQLSCLAALSLGLIFVGTCNGDVASTILQTLMEREESAQNDQWGRFMALGLALLFNGKQDLADATVETLKAIEGKIARQAEILVDICSYAGTGNVLHIQKLLHICSEPPSDDAKESETTIQTFAALGVATIAMGEDIGAEMVLRHFDHMMHYGEPSIRKAIPLALGLLSASNPQMRIFDTLSRYSHDNDLDVAYNAIFAMGLVGAGTSNARLAQLLRQLASYYHKESNALFMVRIAQGLLYLGKGTMTLNPYHTERQILGQTAFAGLMTVVLAMLDANTFVLDTSHWLLYAITLAIRPRMLITLGEDGQYLPVSVRVGQAVDVVGQAGRPKVITGWVTHTTPVLLHHNERAELATEAYTPLTSLEGIVILKKNTEDIEMTA.

A compositionally biased stretch (low complexity) spans 1–12 (MSSKDISSKSPS). The tract at residues 1-48 (MSSKDISSKSPSGNDALNDKKGTKTSETNDRNSTNNTKERDELEDLSE) is disordered. S10 is subject to Phosphoserine. Over residues 17–30 (LNDKKGTKTSETND) the composition is skewed to basic and acidic residues. PC repeat units lie at residues 408 to 441 (SATASIGLLQLWNVDMGLSLLDKYLYSSEENTKA), 442 to 478 (GALLGIGVTNVAVRNEADPAMAILSEYLETGSVKLRA), 479 to 513 (SAILGLGLAYSGANREDLLDMLSPIVTDTDCPMQL), 517 to 550 (AALSLGLIFVGTCNGDVASTILQTLMEREESAQN), 673 to 704 (LALGLLSASNPQMRIFDTLSRYSHDNDLDVAY), and 705 to 739 (NAIFAMGLVGAGTSNARLAQLLRQLASYYHKESNA).

It belongs to the proteasome subunit S2 family. Component of the 26S proteasome. Interacts with ubp6.

In terms of biological role, acts as a regulatory subunit of the 26 proteasome which is involved in the ATP-dependent degradation of ubiquitinated proteins. This chain is 26S proteasome regulatory subunit rpn1 (rpn1), found in Schizosaccharomyces pombe (strain 972 / ATCC 24843) (Fission yeast).